Consider the following 416-residue polypeptide: uncharacterized protein (416 aa).

Residues 341-360 (EDREKGSQHTNNTHHHKRNL) are disordered.

This is an uncharacterized protein from Human cytomegalovirus (strain AD169) (HHV-5).